The chain runs to 2922 residues: Small ribosomal subunit protein uS4c (2922 aa).

In terms of domain architecture, S4 RNA-binding spans 111-174 (MRLDNIVFRL…ISMELVSRFL (64 aa)).

The protein belongs to the universal ribosomal protein uS4 family. In terms of assembly, part of the 30S ribosomal subunit. Contacts protein S5. The interaction surface between S4 and S5 is involved in control of translational fidelity.

Its subcellular location is the plastid. The protein resides in the chloroplast. Its function is as follows. One of the primary rRNA binding proteins, it binds directly to 16S rRNA where it nucleates assembly of the body of the 30S subunit. Functionally, with S5 and S12 plays an important role in translational accuracy. This Stigeoclonium helveticum (Green alga) protein is Small ribosomal subunit protein uS4c (rps4).